Here is a 419-residue protein sequence, read N- to C-terminus: eIF5-mimic protein 1 (419 aa).

Residues 1-22 form a disordered region; that stretch reads MNKHQKPVLTGQRFKTRKRDEK. N6-acetyllysine is present on K117. A W2 domain is found at 248–415; it reads VQQSLGTRKE…QNAEEESESE (168 aa). Phosphoserine is present on residues S412 and S414.

This sequence belongs to the BZW family. Interacts with EIF3E. Interacts with EIF2S2. Interacts with EIF3C.

It localises to the cytoplasm. Functionally, translation initiation regulator which represses non-AUG initiated translation and repeat-associated non-AUG (RAN) initiated translation by acting as a competitive inhibitor of eukaryotic translation initiation factor 5 (EIF5) function. Increases the accuracy of translation initiation by impeding EIF5-dependent translation from non-AUG codons by competing with it for interaction with EIF2S2 within the 43S pre-initiation complex (PIC) in an EIF3C-binding dependent manner. The sequence is that of eIF5-mimic protein 1 (BZW2) from Homo sapiens (Human).